We begin with the raw amino-acid sequence, 89 residues long: Cell division topological specificity factor (89 aa).

It belongs to the MinE family.

In terms of biological role, prevents the cell division inhibition by proteins MinC and MinD at internal division sites while permitting inhibition at polar sites. This ensures cell division at the proper site by restricting the formation of a division septum at the midpoint of the long axis of the cell. The protein is Cell division topological specificity factor of Brucella anthropi (strain ATCC 49188 / DSM 6882 / CCUG 24695 / JCM 21032 / LMG 3331 / NBRC 15819 / NCTC 12168 / Alc 37) (Ochrobactrum anthropi).